The chain runs to 176 residues: Large ribosomal subunit protein uL16 (176 aa).

It belongs to the universal ribosomal protein uL16 family.

The protein is Large ribosomal subunit protein uL16 of Halobacterium salinarum (strain ATCC 29341 / DSM 671 / R1).